Here is a 91-residue protein sequence, read N- to C-terminus: MARMVHCVKLNKEAEGLDFPPLPGELGKKLWQSVSKEAWAGWLKHQTMLINENRLNMADSRARQYLLKQTEKYFFGDGADEAAGYVPPPSA.

It belongs to the Fe(2+)-trafficking protein family.

In terms of biological role, could be a mediator in iron transactions between iron acquisition and iron-requiring processes, such as synthesis and/or repair of Fe-S clusters in biosynthetic enzymes. This is Probable Fe(2+)-trafficking protein from Ralstonia pickettii (strain 12J).